A 288-amino-acid chain; its full sequence is Ankyrin repeat and SOCS box protein 8 (288 aa).

Residue S17 is modified to Phosphoserine. ANK repeat units lie at residues 52-81 (GTLKPLHCACMVSDADCVELLLEKGAEVNA), 85-113 (YNRTALHYAAEKDEACVEVLLEYGANPNA), 117-146 (NRDTPLHWAAFKNNAECVRALLESGASVNA), and 150-179 (NNDTPLSWAAMKGNLESVSILLDYGAEVRV). Positions 235–288 (QLCEKLTVLCSAPGTLKTLSRYAVRRSLGLQYLPDAVKGLPLPASLKEYLLLIE) constitute an SOCS box domain.

Belongs to the ankyrin SOCS box (ASB) family. As to quaternary structure, interacts with TBK1; this interaction promotes TBK1 proteasomal degradation. In terms of processing, phosphorylated by TBK1.

Its subcellular location is the cytoplasm. It participates in protein modification; protein ubiquitination. Functionally, may be a substrate-recognition component of a SCF-like ECS (Elongin-Cullin-SOCS-box protein) E3 ubiquitin-protein ligase complex which mediates the ubiquitination and subsequent proteasomal degradation of target proteins. Inhibits IFN-beta production through the IRF3 signaling pathway by targeting TBK1 via 'Lys-48'-linked ubiquitination, leading to its proteasomal degradation. The chain is Ankyrin repeat and SOCS box protein 8 (ASB8) from Bos taurus (Bovine).